A 507-amino-acid chain; its full sequence is MSCRSYRISPGCGVTRNFSSCSAVAPKTGNRCCISAAPFRGVSCYRGLTGFSSRSLCNPSPCGPRMAVGGFRSGSCGRSFGYRSGGVCGPSPPCITTVSVNESLLTPLNLEIDPNAQCVKYEEKEQIKCLNSKFAAFIDKVRFLEQQNKLLETKWQFYQNRKCCESNLEPLFGGYIEALRREAECVEADSGRLAAELNHVQEAMEGYKKKYEEEVALRATAENEFVVLKKDVDCAYLRKSDLEANVEALVEESSFLKRLYEEEVCVLQAHISDTSVIVKMDNSRDLNMDCVVAEIKAQYDDVASRSRAEAESWYRTKCEEMKATVIRHGETLRRTKEEINELNRMIQRLTAEIENAKCQRAKLEAAVAEAEQQGEAALADARCKLAELEGALQKAKQDMACLLKEYQEVMNSKLALDIEIATYRRLLEGEEQRLCEGVGSVNVCVSSSRGGVTCGGLTYGTTPGRQIVSGPSVTGGSITVMAPDSCSPCQPRASSFTCGSSRSVRFA.

Positions 1-123 are head; sequence MSCRSYRISP…PNAQCVKYEE (123 aa). The 312-residue stretch at 123–434 folds into the IF rod domain; it reads EKEQIKCLNS…RLLEGEEQRL (312 aa). A coil 1A region spans residues 124–158; it reads KEQIKCLNSKFAAFIDKVRFLEQQNKLLETKWQFY. A linker 1 region spans residues 159 to 168; the sequence is QNRKCCESNL. Residues 169–269 are coil 1B; that stretch reads EPLFGGYIEA…YEEEVCVLQA (101 aa). Lys-229 participates in a covalent cross-link: Glycyl lysine isopeptide (Lys-Gly) (interchain with G-Cter in SUMO1). Residues 270 to 286 are linker 12; it reads HISDTSVIVKMDNSRDL. The interval 287 to 430 is coil 2; the sequence is NMDCVVAEIK…ATYRRLLEGE (144 aa). A tail region spans residues 431-507; the sequence is EQRLCEGVGS…CGSSRSVRFA (77 aa).

Belongs to the intermediate filament family. Heterotetramer of two type I and two type II keratins.

The sequence is that of Keratin, type II cuticular Hb5 (Krt85) from Mus musculus (Mouse).